The sequence spans 379 residues: Putative clathrin assembly protein At1g68110 (379 aa).

In terms of domain architecture, ENTH spans 26 to 158; sequence NSSYRNADLE…SFLSDQIHRL (133 aa).

The protein resides in the membrane. Its subcellular location is the clathrin-coated pit. It localises to the golgi apparatus. The protein localises to the cytoplasmic vesicle. It is found in the clathrin-coated vesicle. The polypeptide is Putative clathrin assembly protein At1g68110 (Arabidopsis thaliana (Mouse-ear cress)).